The chain runs to 345 residues: GTPase Obg (345 aa).

An Obg domain is found at 1–159 (MKFIDEAIIK…RTLRLELKLL (159 aa)). A disordered region spans residues 127–148 (NARFKSSTNRAPRKTTQGKPGE). Polar residues predominate over residues 130–144 (FKSSTNRAPRKTTQG). One can recognise an OBG-type G domain in the interval 160-334 (ADVGLLGLPN…LIHAVMQYLE (175 aa)). GTP is bound by residues 166 to 173 (GLPNAGKS), 191 to 195 (FTTLH), 213 to 216 (DIPG), 284 to 287 (NKTD), and 315 to 317 (SAL). Positions 173 and 193 each coordinate Mg(2+).

Belongs to the TRAFAC class OBG-HflX-like GTPase superfamily. OBG GTPase family. In terms of assembly, monomer. It depends on Mg(2+) as a cofactor.

The protein localises to the cytoplasm. An essential GTPase which binds GTP, GDP and possibly (p)ppGpp with moderate affinity, with high nucleotide exchange rates and a fairly low GTP hydrolysis rate. Plays a role in control of the cell cycle, stress response, ribosome biogenesis and in those bacteria that undergo differentiation, in morphogenesis control. The protein is GTPase Obg of Nitrosococcus oceani (strain ATCC 19707 / BCRC 17464 / JCM 30415 / NCIMB 11848 / C-107).